Reading from the N-terminus, the 170-residue chain is Transcription factor E (170 aa).

The region spanning 1–93 (MKDAYLYVVE…AWYVDDEIIR (93 aa)) is the HTH TFE/IIEalpha-type domain.

The protein belongs to the TFE family. Monomer. Interaction with RNA polymerase subunits RpoF and RpoE is necessary for Tfe stimulatory transcription activity. Able to interact with Tbp and RNA polymerase in the absence of DNA promoter. Interacts both with the preinitiation and elongation complexes.

In terms of biological role, transcription factor that plays a role in the activation of archaeal genes transcribed by RNA polymerase. Facilitates transcription initiation by enhancing TATA-box recognition by TATA-box-binding protein (Tbp), and transcription factor B (Tfb) and RNA polymerase recruitment. Not absolutely required for transcription in vitro, but particularly important in cases where Tbp or Tfb function is not optimal. It dynamically alters the nucleic acid-binding properties of RNA polymerases by stabilizing the initiation complex and destabilizing elongation complexes. Seems to translocate with the RNA polymerase following initiation and acts by binding to the non template strand of the transcription bubble in elongation complexes. This Pyrobaculum arsenaticum (strain DSM 13514 / JCM 11321 / PZ6) protein is Transcription factor E.